A 466-amino-acid chain; its full sequence is Asparagine--tRNA ligase (466 aa).

This sequence belongs to the class-II aminoacyl-tRNA synthetase family. Homodimer.

The protein localises to the cytoplasm. It catalyses the reaction tRNA(Asn) + L-asparagine + ATP = L-asparaginyl-tRNA(Asn) + AMP + diphosphate + H(+). The chain is Asparagine--tRNA ligase from Aliivibrio fischeri (strain ATCC 700601 / ES114) (Vibrio fischeri).